A 344-amino-acid polypeptide reads, in one-letter code: Programmed cell death protein 2 (344 aa).

8 residues coordinate Zn(2+): Cys135, Cys138, Cys146, Cys149, Cys155, His159, His168, and Cys172. The MYND-type; atypical zinc-finger motif lies at 135–172 (CRVCGCSGPKRCSRCHKAHYCSKEHQSLDWRLGHKQAC).

Post-translationally, ubiquitinated by PRKN, promoting proteasomal degradation.

It localises to the nucleus. Functionally, may be a DNA-binding protein with a regulatory function. May play an important role in cell death and/or in regulation of cell proliferation. In Bos taurus (Bovine), this protein is Programmed cell death protein 2 (PDCD2).